Reading from the N-terminus, the 1653-residue chain is MSDLPIEFTELVDLMSLGISPQFLDFRSTTFESDHFVTVRETKDGTNSVAIVDLAKGNEVTRKNMGGDSAIMHPSQMVISVRANGTIVQIFNLETKSKLKSFTLDEPVIFWRWLSETTLGFVTARSILTSNVFDGNVNAKPQLLTLRHANLNNTQIINFVANKNLDWFAVVGILQENGRIAGRIQLFSKQRNISQAIDGHVAIFTNILLEGNGSTPVQVFVTGNRNATTGAGELRIIEIDHDASLPSQYQKETTDIFFPPDATNDFPIAVQVSEKYGIIYLLTKYGFIHLYELETGTNLFVNRITAESVFTAAPYNHENGIACINKKGQVLAVEISTSQIVPYILNKLSNVALALIVATRGGLPGADDLFQKQFESLLLQNDYQNAAKVAASSTSLRNQNTINRLKNIQAPPGAISPILLYFSTLLDKGKLNKEETIELARPVLQQDRKQLFEKWLKEDKLECSEELGDIVKPFDTTLALACYLRAGAHAKVISCLAELQQFEKIIPYCQKVGYQPNFLVLISSLIRSSPDRASEFAVSLLQNPETASQIDIEKIADLFFSQNHIQQGTSLLLDALKGDTPDQGHLQTRVLEVNLLHAPQVADAILGNNIFSHYDKPTIASLSEKAGLYQRALENYTDIKDIKRCVVHTNALPIDWLVGYFGKLNVEQSLACLKALMDNNIQANIQTVVQVATKFSDLIGPSTLIKLFEDYNATEGLYYYLASLVNLTEDKDVVYKYIEAAAKMKQYREIERIVKDNNVYDPERVKNFLKDANLEDQLPLVIVCDRFDFVHEMILYLYKSQNLKFIETYVQQVNPSKTAQVVGALLDMDCDEAFIQSLLQSVLGQVPINELTTEVEKRNRLKILLPFLEQSLSQGIQDQAVYNALAKIYIDSNNSPEKFLKENDQYDTLDVGHYCEKRDPYLAYIAYEKGQNDDDLIRITNENSMYKYQARYLLERSDLDLWNKVLNQENIHRRQLIDSVISVGIPELTDPEPVSLTVQAFMTNGLKLELIELLEKIILEPSPFNENVALQGLLLLSAIKYEPTKVSSYIEKLDNYDADEIAPLCIEHDLKEEAFEIYDKHEMYGKALKVLIEDIMSLDRAASYADKINTPELWSQIGTAQLDGLRIPDAIESYIKAEDPSNYENVIDIAEQAGKYEELIPFLLMARKTLKEPKIDGALILAYAELNKIHEIENLLAGSNVANLDHVGDKLFENKEYKAARLCYSAVSNYSKLASTLVYLGDYQAAVDTARKASNIKVWKLVNDACIEKKEFKLAQICGLNLIVHAEELDELVERYESNGYFEELISLFEAGLGLERAHMGMFTELAILYSKYEPDKTFEHLKLFWSRINIPKVIRAVEQAHLWSELVFLYAHYDEWDNAALTLIEKSTKDLDHAYFKEVVVKVSNLEIYYKAINFYVKFHPSLLVDLLTSLTPRLDIPRTVKIFSKSDNLPLIKPFLINVLPKNNSVVNQAYHDLMIEEEDYKALQDAVDSYDKFDQLGLASRLESHKLIFFKKIGALLYRRNKKWAKSLSILKEEKLWKDAIETAAISQDPKVVEALLTYFVETGNREGFVALLYAAYNLVRIEFVLEISWMNSLEDYIKPFEISIKKEQNDSIKKITEELAKKSGSNEEHKDGQPLMLMNSAMNVQPTGF.

The tract at residues 1-483 is globular terminal domain; that stretch reads MSDLPIEFTE…FDTTLALACY (483 aa). WD40-like repeat regions lie at residues 23–66, 67–107, 108–152, 153–198, 199–263, 264–307, and 308–336; these read FLDF…KNMG, GDSA…LDEP, VIFW…ANLN, NTQI…QAID, GHVA…PDAT, NDFP…ITAE, and SVFT…VEIS. The segment at 453 to 469 is binding site for the uncoating ATPase, involved in lattice disassembly; sequence EKWLKEDKLECSEELGD. The tract at residues 484–527 is flexible linker; it reads LRAGAHAKVISCLAELQQFEKIIPYCQKVGYQPNFLVLISSLIR. Positions 528-1653 are heavy chain arm; the sequence is SSPDRASEFA…SAMNVQPTGF (1126 aa). CHCR repeat units lie at residues 543–689, 692–834, 839–978, 985–1130, 1134–1275, 1280–1426, and 1429–1572; these read NPET…QTVV, ATKF…DEAF, LQSV…QLID, IPEL…IPDA, YIKA…FKLA, LNLI…SLLV, and LTSL…REGF. Residue Lys-1107 forms a Glycyl lysine isopeptide (Lys-Gly) (interchain with G-Cter in ubiquitin) linkage. An involved in binding clathrin light chain region spans residues 1219–1528; it reads AARLCYSAVS…LLYRRNKKWA (310 aa).

This sequence belongs to the clathrin heavy chain family. In terms of assembly, clathrin triskelions, composed of 3 heavy chains and 3 light chains, are the basic subunits of the clathrin coat. Interacts with the auxilin-like clathrin uncoating factor SWA2. Interacts with INP53.

It is found in the cytoplasmic vesicle membrane. It localises to the membrane. The protein localises to the coated pit. In terms of biological role, clathrin is the major protein of the polyhedral coat of coated pits and vesicles. In yeast, it is involved in the retention of proteins in an intracellular membrane compartment, presumably the trans-Golgi. This is Clathrin heavy chain (CHC1) from Saccharomyces cerevisiae (strain ATCC 204508 / S288c) (Baker's yeast).